The primary structure comprises 762 residues: MSSHITLIKTNTNNENQMTQFNYKVDNDVMIIRAMVNNVAKQITPVWPLEKFIACNSLHGFESMSFEEAVIQNQTAKKGTPFNEKLERVNWHMIKWCGSFLDIGQGTLEMPHRDKGLYFGFLKLAPFDSELHQNNKSTKSWLSNLPEMPEQAIRLCLNKLGVLNQKQEKFLKSTLSHLPGWAGYIKWISEWKNRNGKEENPVSLADFLAVRLIITCVLWPEASQEEKKKKKDNAYTKQLIQNIKNKEDDYRQLLLNKLLPELDKVQIKENRANAQMVFCIDVRSEPFRRCIEKLGHYETLGFAGFFGLPVSIKDYDGETIKDSCPVLLKPRFNIHEKAIAANEHCIEHHEKGKEFKNILNRIYQQLKYNFSTPFALVESLGIWCGITMFLKSCSPIFARRLTKDLNEMICPSIQTQPVFELDLLEKEVGISLQEQIAYAEMALRLMGLTDNFAKLVIFCGHGSSTQNNPYASALDCGACGGNQGGKNAQLLASILNKIIVRRALAENGINIPQDTLFYGAQHDTTTDEVEIYHSNVSQFIHQDILDQLRTDLNIAKHNNNLERINYLNSIDCAEKDIARRSTDWSETRPEWGLARNAAFIVAPRQLTKNINLEGRCFLHSYDWSQDKDGALLETILTAPMVVAQWINTQYLFSTIDNVAYGSGSKITHNVAGKIGVMQGNASDLMHGLPLQSVMSHDDKSFHEPQRLLTLVYAPREIISELVEKHDVLKTLFFNEWVHLVAIDPRSHLFYKLEKTNTWSVIQ.

The Zn(2+) site is built by C279, D281, H461, and C476.

The protein belongs to the inorganic carbon transporter (TC 9.A.2) DabA family. In terms of assembly, forms a complex with DabB. The cofactor is Zn(2+).

The protein resides in the cell inner membrane. Its function is as follows. Part of an energy-coupled inorganic carbon pump. The chain is Probable inorganic carbon transporter subunit DabA from Legionella pneumophila (strain Corby).